Here is a 157-residue protein sequence, read N- to C-terminus: Arginine regulator (157 aa).

It belongs to the ArgR family.

It localises to the cytoplasm. Its pathway is amino-acid degradation; L-arginine degradation via ADI pathway. Its function is as follows. Regulates the transcription of the arc operon, involved in arginine catabolism. The polypeptide is Arginine regulator (argR1) (Streptococcus pyogenes serotype M3 (strain ATCC BAA-595 / MGAS315)).